The chain runs to 379 residues: Protein-glutamate methylesterase/protein-glutamine glutaminase (379 aa).

Positions 4–121 (KVLVVDDSSF…AKNSDEAGSL (118 aa)) constitute a Response regulatory domain. Aspartate 55 is modified (4-aspartylphosphate). One can recognise a CheB-type methylesterase domain in the interval 185 to 379 (SGKEYKLLAI…ASMVKEISRG (195 aa)). Active-site residues include serine 197, histidine 224, and aspartate 321.

Belongs to the CheB family. In terms of processing, phosphorylated by CheA. Phosphorylation of the N-terminal regulatory domain activates the methylesterase activity.

It localises to the cytoplasm. It carries out the reaction [protein]-L-glutamate 5-O-methyl ester + H2O = L-glutamyl-[protein] + methanol + H(+). The enzyme catalyses L-glutaminyl-[protein] + H2O = L-glutamyl-[protein] + NH4(+). Its function is as follows. Involved in chemotaxis. Part of a chemotaxis signal transduction system that modulates chemotaxis in response to various stimuli. Catalyzes the demethylation of specific methylglutamate residues introduced into the chemoreceptors (methyl-accepting chemotaxis proteins or MCP) by CheR. Also mediates the irreversible deamidation of specific glutamine residues to glutamic acid. The polypeptide is Protein-glutamate methylesterase/protein-glutamine glutaminase (Colwellia psychrerythraea (strain 34H / ATCC BAA-681) (Vibrio psychroerythus)).